Here is a 118-residue protein sequence, read N- to C-terminus: Large ribosomal subunit protein bL20 (118 aa).

Belongs to the bacterial ribosomal protein bL20 family.

Its function is as follows. Binds directly to 23S ribosomal RNA and is necessary for the in vitro assembly process of the 50S ribosomal subunit. It is not involved in the protein synthesizing functions of that subunit. The protein is Large ribosomal subunit protein bL20 of Staphylococcus carnosus (strain TM300).